The sequence spans 411 residues: MRCEILSVGTELLLGDILNTNAQYLSRRLADLGIPVYFHTTVGDNPERLKKALEIAFSRSDMVIATGGLGPTQDDLTKEISAEFFNKKLVLHEESLKRIKEFFERRGLNLTEGNIKQAYIIEGSRVIPNDWGTAPGIILEEGGKILILLPGPPKEMIPMFETYVVPYLSTFSSGIIYSKVLRVCGIGESFMEEKVKDLIKSQTNPTIAPYAKEGEAILRITARAKSKEEAEKMIEGVVKEIRKRLGDYIYGEGETSLEEVVVNLLLEKGLTISVAESCTGGLISARLVNVPGVSKVFKGSIIAYDNEVKIKELNVPEEIFKEYGAVSSQCAMKMAEGIAKKMGTDVGLSATGIAGPEGGTLEKPIGLVYIGLYIRGEMSYKELRLSGDRNRIRLYTTINGLDLLRRGLLNL.

This sequence belongs to the CinA family.

This Dictyoglomus turgidum (strain DSM 6724 / Z-1310) protein is CinA-like protein.